The sequence spans 145 residues: Copper transporter 6 (145 aa).

The next 2 membrane-spanning stretches (helical) occupy residues 47 to 67 and 99 to 119; these read LGMY…VEWL and YLVM…AIAG.

Belongs to the copper transporter (Ctr) (TC 1.A.56) family. SLC31A subfamily.

It localises to the membrane. Involved in the transport of copper. The sequence is that of Copper transporter 6 (COPT6) from Arabidopsis thaliana (Mouse-ear cress).